The primary structure comprises 439 residues: MNISVSMNKFDSKIKFVQLVFVDINGMPKGMEIPASRLEEAVTDGISFDGSSVPGFQGIEDSDLVFKADPDTYVEVPWDNVARVYGFIYKDNKPYGADPRGILKRALEELEKEGYKAYIGPEPEFYLFKKNGTWELEIPDVGGYFDILTLDKARDIRREIAEYMPSFGLIPEVLHHEVGKAQHEIDFRYDEALKTADNIVSFKYITKAVAEMHGLYATFMPKPLFGFPGNGMHLHISLWKDGENVFMGEEGLSEIALHFIGGILKHAKALTAVTNPTVNSYKRLVPSYEAPVYISWGYRNRSALIRVPAFWGKGARIEYRCPDPSANPYFAFAAVLKAGLDGIKHKIDPFAYVEENVYEMSEEKRKELGIETLPGSLGEALEELEKDKVVKEALGDAYKNFINYKWKEWESYLEYLEEKHMPKDTKKVTEWELERYFFL.

The region spanning 12 to 93 is the GS beta-grasp domain; it reads SKIKFVQLVF…VYGFIYKDNK (82 aa). Positions 99 to 439 constitute a GS catalytic domain; sequence PRGILKRALE…EWELERYFFL (341 aa). E122 and E124 together coordinate Mg(2+). Residue E172 participates in ATP binding. E177 and E184 together coordinate Mg(2+). An L-glutamate-binding site is contributed by G229. Residue H233 participates in Mg(2+) binding. Residues 235-237 and S237 contribute to the ATP site; that span reads HIS. Residues R283, E289, and R301 each contribute to the L-glutamate site. The ATP site is built by R301, R306, and K313. E318 serves as a coordination point for Mg(2+). R320 provides a ligand contact to L-glutamate.

This sequence belongs to the glutamine synthetase family. As to quaternary structure, oligomer of 12 subunits arranged in the form of two hexagons. Mg(2+) is required as a cofactor.

The protein localises to the cytoplasm. The enzyme catalyses L-glutamate + NH4(+) + ATP = L-glutamine + ADP + phosphate + H(+). In terms of biological role, probably involved in nitrogen metabolism via ammonium assimilation. Catalyzes the ATP-dependent biosynthesis of glutamine from glutamate and ammonia. In Pyrococcus furiosus (strain ATCC 43587 / DSM 3638 / JCM 8422 / Vc1), this protein is Glutamine synthetase.